We begin with the raw amino-acid sequence, 160 residues long: Transcription elongation factor GreA (160 aa).

Residues 1-72 adopt a coiled-coil conformation; it reads MAEKTYVMTL…QIQILETKIR (72 aa).

It belongs to the GreA/GreB family.

Necessary for efficient RNA polymerase transcription elongation past template-encoded arresting sites. The arresting sites in DNA have the property of trapping a certain fraction of elongating RNA polymerases that pass through, resulting in locked ternary complexes. Cleavage of the nascent transcript by cleavage factors such as GreA or GreB allows the resumption of elongation from the new 3'terminus. GreA releases sequences of 2 to 3 nucleotides. This Streptococcus thermophilus (strain ATCC BAA-491 / LMD-9) protein is Transcription elongation factor GreA.